The sequence spans 837 residues: Translation initiation factor IF-2 (837 aa).

2 disordered regions span residues 1–44 (MTEK…VRKS) and 62–251 (KAQE…TKPA). Basic and acidic residues-rich tracts occupy residues 62 to 102 (KAQE…EAKP) and 111 to 165 (ADPE…HNDS). Basic residues predominate over residues 189-205 (RENHIRTGKNKVTKAKK). A compositionally biased stretch (basic and acidic residues) spans 206–229 (GGRDDNGSKDERSADRRNQKDMRG). Residues 242–251 (TLQQAFTKPA) show a composition bias toward polar residues. Positions 337–506 (QRAPVVTIMG…LLQSEVLELT (170 aa)) constitute a tr-type G domain. The G1 stretch occupies residues 346–353 (GHVDHGKT). 346–353 (GHVDHGKT) contributes to the GTP binding site. The tract at residues 371–375 (GITQH) is G2. Residues 392-395 (DTPG) form a G3 region. GTP-binding positions include 392-396 (DTPGH) and 446-449 (NKID). Residues 446–449 (NKID) are G4. The tract at residues 482–484 (SAK) is G5.

Belongs to the TRAFAC class translation factor GTPase superfamily. Classic translation factor GTPase family. IF-2 subfamily.

It is found in the cytoplasm. Its function is as follows. One of the essential components for the initiation of protein synthesis. Protects formylmethionyl-tRNA from spontaneous hydrolysis and promotes its binding to the 30S ribosomal subunits. Also involved in the hydrolysis of GTP during the formation of the 70S ribosomal complex. This chain is Translation initiation factor IF-2, found in Actinobacillus succinogenes (strain ATCC 55618 / DSM 22257 / CCUG 43843 / 130Z).